The primary structure comprises 440 residues: Kinetochore protein NUF2 homolog (440 aa).

Coiled-coil stretches lie at residues 142 to 239 (LGLL…LRSQ) and 299 to 386 (INEQ…RQTN).

The protein belongs to the NUF2 family. Component of the NDC80 complex, which consists of NDC80, NUF2, SPC24 and SPC25.

It localises to the chromosome. The protein resides in the centromere. Acts as a component of the essential kinetochore-associated NDC80 complex, which is required for chromosome segregation and spindle checkpoint activity to ensure proper cell division. The sequence is that of Kinetochore protein NUF2 homolog from Arabidopsis thaliana (Mouse-ear cress).